Here is a 161-residue protein sequence, read N- to C-terminus: Protein-export protein SecB (161 aa).

Belongs to the SecB family. In terms of assembly, homotetramer, a dimer of dimers. One homotetramer interacts with 1 SecA dimer.

It is found in the cytoplasm. Its function is as follows. One of the proteins required for the normal export of preproteins out of the cell cytoplasm. It is a molecular chaperone that binds to a subset of precursor proteins, maintaining them in a translocation-competent state. It also specifically binds to its receptor SecA. The sequence is that of Protein-export protein SecB from Pseudomonas fluorescens (strain Pf0-1).